The sequence spans 125 residues: Protein MGF 110-7L (125 aa).

The first 20 residues, 1 to 20 (MLVIILGVIGLLASSNLVSS), serve as a signal peptide directing secretion. N-linked (GlcNAc...) asparagine; by host glycans are attached at residues Asn69, Asn70, and Asn105.

It belongs to the asfivirus MGF 110 family.

Functionally, plays a role in virus cell tropism, and may be required for efficient virus replication in macrophages. This chain is Protein MGF 110-7L, found in Ornithodoros (relapsing fever ticks).